Here is a 353-residue protein sequence, read N- to C-terminus: MAATKRKRRGGLEVQAKKPKRSSKDAGQPAKQADVAKEAEEENRDRIPGPVCKGKWKNKERILIFSSRGINFRTRHLMQDLRMLMPHSKADTKMDRKDKLFVINEVCEMKNCNKCIYFEAKKKQDLYMWLSNSPHGPSAKFLVQNIHTLAELKMTGNCLKGSRPLLSFDPAFDDLPHYALLKEFLIQIFSTPRYHPKSQPFVDHVFTFTILDNRIWFRNFQIIEEDAALVEIGPRFVLNLIKIFQGSFGGPTLYENPHYQSPNMHRRVIRSITAAKYRERQQVKDVQKLRKKEPKTILPHDPTADVFVIPAEEKPVEIQWVKPEPKVDLKARKRRIYKRHRKLQQKMSRGSAK.

Residues 1–50 (MAATKRKRRGGLEVQAKKPKRSSKDAGQPAKQADVAKEAEEENRDRIPGP) are disordered. Over residues 34-47 (DVAKEAEEENRDRI) the composition is skewed to basic and acidic residues. Positions 60 to 249 (ERILIFSSRG…LIKIFQGSFG (190 aa)) constitute a Brix domain. A Glycyl lysine isopeptide (Lys-Gly) (interchain with G-Cter in SUMO2) cross-link involves residue Lys160. Ser261 carries the post-translational modification Phosphoserine. Position 276 is an N6-acetyllysine (Lys276). Glycyl lysine isopeptide (Lys-Gly) (interchain with G-Cter in SUMO2) cross-links involve residues Lys314 and Lys322. Residues 334–344 (RRIYKRHRKLQ) show a composition bias toward basic residues. The disordered stretch occupies residues 334–353 (RRIYKRHRKLQQKMSRGSAK).

It belongs to the BRX1 family.

The protein localises to the nucleus. The protein resides in the nucleolus. Functionally, required for biogenesis of the 60S ribosomal subunit. This Mus musculus (Mouse) protein is Ribosome biogenesis protein BRX1 homolog (Brix1).